A 442-amino-acid chain; its full sequence is Envelope glycoprotein D (442 aa).

An N-terminal signal peptide occupies residues 1-19; it reads MPAVLLVLYVNPPPSVCIL. Residues 20–405 lie on the Virion surface side of the membrane; it reads TQKLSLGLYN…NSTFVGISVG (386 aa). Residues Asn103 and Asn111 are each glycosylated (N-linked (GlcNAc...) asparagine; by host). 3 disulfides stabilise this stretch: Cys138-Cys259, Cys176-Cys273, and Cys188-Cys197. The tract at residues 331-364 is disordered; the sequence is PDNHPGFDSVESEITQNKTDPKPGQADPKPNQPF. N-linked (GlcNAc...) asparagine; by host glycans are attached at residues Asn347 and Asn396. A helical transmembrane segment spans residues 406 to 422; sequence LGIAGLVLVGVILYVCL. The Intravirion segment spans residues 423–442; sequence RRKKELKVCTERLDSPTLDL.

Belongs to the herpesviridae glycoprotein D family.

It is found in the virion membrane. Envelope glycoprotein that binds to host cell entry receptors, promoting the virus entry into host cells. May trigger fusion with host membrane, by recruiting the fusion machinery composed of gB and gH/gL. The polypeptide is Envelope glycoprotein D (gD) (Equine herpesvirus 1 (strain Kentucky A) (EHV-1)).